Here is a 254-residue protein sequence, read N- to C-terminus: Leucyl/phenylalanyl-tRNA--protein transferase (254 aa).

Positions 1–10 (MSSQPPPLPW) are enriched in pro residues. The disordered stretch occupies residues 1–28 (MSSQPPPLPWLDPNQDFPPTSQAWDENS).

The protein belongs to the L/F-transferase family.

It is found in the cytoplasm. It carries out the reaction N-terminal L-lysyl-[protein] + L-leucyl-tRNA(Leu) = N-terminal L-leucyl-L-lysyl-[protein] + tRNA(Leu) + H(+). It catalyses the reaction N-terminal L-arginyl-[protein] + L-leucyl-tRNA(Leu) = N-terminal L-leucyl-L-arginyl-[protein] + tRNA(Leu) + H(+). The catalysed reaction is L-phenylalanyl-tRNA(Phe) + an N-terminal L-alpha-aminoacyl-[protein] = an N-terminal L-phenylalanyl-L-alpha-aminoacyl-[protein] + tRNA(Phe). Its function is as follows. Functions in the N-end rule pathway of protein degradation where it conjugates Leu, Phe and, less efficiently, Met from aminoacyl-tRNAs to the N-termini of proteins containing an N-terminal arginine or lysine. This Albidiferax ferrireducens (strain ATCC BAA-621 / DSM 15236 / T118) (Rhodoferax ferrireducens) protein is Leucyl/phenylalanyl-tRNA--protein transferase.